An 869-amino-acid chain; its full sequence is Synaptonemal complex protein ZEP1 (869 aa).

3 coiled-coil regions span residues 64–298, 330–614, and 641–713; these read TDLE…SGFT, HEEK…SERY, and RAYH…WKVM. Residues 841 to 869 are disordered; that stretch reads GSHPHPANIGELFSEGSLNPYAEDPYAFG.

Interacts with CRC1. In terms of tissue distribution, highly expressed in panicles.

The protein resides in the nucleus. The protein localises to the chromosome. Required for chromosome synapsis and regulates crossover frequency during meiosis. Acts as a transverse filament protein and constitutes the central element of the synaptonemal complex. The protein is Synaptonemal complex protein ZEP1 (ZEP1) of Oryza sativa subsp. japonica (Rice).